A 37-amino-acid polypeptide reads, in one-letter code: Large ribosomal subunit protein bL36 (37 aa).

The protein belongs to the bacterial ribosomal protein bL36 family.

This Syntrophomonas wolfei subsp. wolfei (strain DSM 2245B / Goettingen) protein is Large ribosomal subunit protein bL36.